The sequence spans 276 residues: Diaminopimelate epimerase (276 aa).

3 residues coordinate substrate: asparagine 11, glutamine 44, and asparagine 64. Catalysis depends on cysteine 73, which acts as the Proton donor. Substrate is bound by residues 74-75 (IN), asparagine 159, asparagine 192, and 210-211 (ER). Residue cysteine 219 is the Proton acceptor of the active site. Residue 220-221 (GS) coordinates substrate.

Belongs to the diaminopimelate epimerase family. Homodimer.

The protein resides in the cytoplasm. The enzyme catalyses (2S,6S)-2,6-diaminopimelate = meso-2,6-diaminopimelate. The protein operates within amino-acid biosynthesis; L-lysine biosynthesis via DAP pathway; DL-2,6-diaminopimelate from LL-2,6-diaminopimelate: step 1/1. In terms of biological role, catalyzes the stereoinversion of LL-2,6-diaminopimelate (L,L-DAP) to meso-diaminopimelate (meso-DAP), a precursor of L-lysine and an essential component of the bacterial peptidoglycan. This is Diaminopimelate epimerase from Wigglesworthia glossinidia brevipalpis.